A 284-amino-acid polypeptide reads, in one-letter code: Bifunctional protein FolD (284 aa).

NADP(+) contacts are provided by residues 165 to 167 (GRS), Ser190, and Ile231.

This sequence belongs to the tetrahydrofolate dehydrogenase/cyclohydrolase family. As to quaternary structure, homodimer.

The catalysed reaction is (6R)-5,10-methylene-5,6,7,8-tetrahydrofolate + NADP(+) = (6R)-5,10-methenyltetrahydrofolate + NADPH. The enzyme catalyses (6R)-5,10-methenyltetrahydrofolate + H2O = (6R)-10-formyltetrahydrofolate + H(+). The protein operates within one-carbon metabolism; tetrahydrofolate interconversion. Catalyzes the oxidation of 5,10-methylenetetrahydrofolate to 5,10-methenyltetrahydrofolate and then the hydrolysis of 5,10-methenyltetrahydrofolate to 10-formyltetrahydrofolate. The protein is Bifunctional protein FolD of Dechloromonas aromatica (strain RCB).